The following is a 261-amino-acid chain: Auxin-responsive protein IAA10 (261 aa).

Residues 1–43 (MNGLQEVCSSSGSVMIGLPAEEDENAAHSSEDSSCPDESVSET) are disordered. The EAR-like (transcriptional repression) motif lies at 45-49 (LDLAL). The tract at residues 62–90 (LSSSSSSLTRESGTKRSADSSPAAASNAT) is disordered. Positions 80 to 89 (DSSPAAASNA) are enriched in low complexity. Residues 151–253 (SMLVKVTMDG…SVTRLRIMKT (103 aa)) form the PB1 domain.

It belongs to the Aux/IAA family. Homodimers and heterodimers. In terms of tissue distribution, preferentially expressed in vegetative organs.

It is found in the nucleus. Aux/IAA proteins are short-lived transcriptional factors that function as repressors of early auxin response genes at low auxin concentrations. Repression is thought to result from the interaction with auxin response factors (ARFs), proteins that bind to the auxin-responsive promoter element (AuxRE). Formation of heterodimers with ARF proteins may alter their ability to modulate early auxin response genes expression. The chain is Auxin-responsive protein IAA10 (IAA10) from Arabidopsis thaliana (Mouse-ear cress).